We begin with the raw amino-acid sequence, 415 residues long: Methylthioribose-1-phosphate isomerase (415 aa).

Residue D284 is the Proton donor of the active site.

This sequence belongs to the eIF-2B alpha/beta/delta subunits family. MtnA subfamily.

It is found in the cytoplasm. It localises to the nucleus. It catalyses the reaction 5-(methylsulfanyl)-alpha-D-ribose 1-phosphate = 5-(methylsulfanyl)-D-ribulose 1-phosphate. The protein operates within amino-acid biosynthesis; L-methionine biosynthesis via salvage pathway; L-methionine from S-methyl-5-thio-alpha-D-ribose 1-phosphate: step 1/6. Functionally, catalyzes the interconversion of methylthioribose-1-phosphate (MTR-1-P) into methylthioribulose-1-phosphate (MTRu-1-P). The protein is Methylthioribose-1-phosphate isomerase of Candida glabrata (strain ATCC 2001 / BCRC 20586 / JCM 3761 / NBRC 0622 / NRRL Y-65 / CBS 138) (Yeast).